The chain runs to 311 residues: MSRSRFRGRITGWYLMASSSGEKLDWCGCGRPPRIVVLGAPDKLNVSSAWKRLRPTIQSHAELIAADFEFTYDFSDKEVDLVIVIGGDGSILQSARQMGENQTPVLGINCGRLGFLAALSPEDFLDAWPKVCQGDFSIIRHLMLEVQLIRDDEVIAQSMALNEAAILNGPPFAILDIDLYADGELATQYRCDGLIVATPVGSTAHNLSAGGPILRRQLQAIVISPISPHTLTYRPLVDSADTRLELAVTEPNESTSIVVDGRILGQLKSGDRVRVHRAPVSFEMLRVPGQNDYRTLREKLGWSGRLALRQL.

Aspartate 88 serves as the catalytic Proton acceptor. Residues aspartate 88–glycine 89, asparagine 162–glutamate 163, arginine 190, aspartate 192, valine 200, and threonine 203–serine 208 each bind NAD(+).

This sequence belongs to the NAD kinase family. Requires a divalent metal cation as cofactor.

It localises to the cytoplasm. The enzyme catalyses NAD(+) + ATP = ADP + NADP(+) + H(+). Involved in the regulation of the intracellular balance of NAD and NADP, and is a key enzyme in the biosynthesis of NADP. Catalyzes specifically the phosphorylation on 2'-hydroxyl of the adenosine moiety of NAD to yield NADP. This chain is NAD kinase, found in Rhodopirellula baltica (strain DSM 10527 / NCIMB 13988 / SH1).